The primary structure comprises 396 residues: Mannonate dehydratase (396 aa).

The protein belongs to the mannonate dehydratase family. It depends on Fe(2+) as a cofactor. The cofactor is Mn(2+).

The enzyme catalyses D-mannonate = 2-dehydro-3-deoxy-D-gluconate + H2O. The protein operates within carbohydrate metabolism; pentose and glucuronate interconversion. In terms of biological role, catalyzes the dehydration of D-mannonate. The chain is Mannonate dehydratase from Enterobacter sp. (strain 638).